The chain runs to 780 residues: uncharacterized protein (780 aa).

The BTB domain maps to 10–80 (NNNIIKLNIG…MRTGTFTLPY (71 aa)).

This is an uncharacterized protein from Dictyostelium discoideum (Social amoeba).